Consider the following 634-residue polypeptide: Extracellular metalloproteinase MEP (634 aa).

A signal peptide spans 1–18 (MRGLLLAGALALPASVFA). The propeptide occupies 19-245 (HPAHQSYGLN…IHGVVDYVAE (227 aa)). His-429 lines the Zn(2+) pocket. Glu-430 is an active-site residue. His-433 contacts Zn(2+).

Belongs to the peptidase M36 family. Zn(2+) is required as a cofactor.

The protein localises to the secreted. Functionally, secreted metalloproteinase that allows assimilation of proteinaceous substrates and probably acts as a virulence factor. This is Extracellular metalloproteinase MEP (MEP) from Neosartorya fischeri (strain ATCC 1020 / DSM 3700 / CBS 544.65 / FGSC A1164 / JCM 1740 / NRRL 181 / WB 181) (Aspergillus fischerianus).